Reading from the N-terminus, the 150-residue chain is 3-hydroxyacyl-[acyl-carrier-protein] dehydratase FabZ (150 aa).

The active site involves histidine 51.

Belongs to the thioester dehydratase family. FabZ subfamily.

The protein localises to the cytoplasm. It catalyses the reaction a (3R)-hydroxyacyl-[ACP] = a (2E)-enoyl-[ACP] + H2O. Involved in unsaturated fatty acids biosynthesis. Catalyzes the dehydration of short chain beta-hydroxyacyl-ACPs and long chain saturated and unsaturated beta-hydroxyacyl-ACPs. The protein is 3-hydroxyacyl-[acyl-carrier-protein] dehydratase FabZ of Legionella pneumophila (strain Paris).